Reading from the N-terminus, the 559-residue chain is Glucose-6-phosphate isomerase (559 aa).

Residue Glu-363 is the Proton donor of the active site. Catalysis depends on residues His-394 and Lys-523.

It belongs to the GPI family.

Its subcellular location is the cytoplasm. It catalyses the reaction alpha-D-glucose 6-phosphate = beta-D-fructose 6-phosphate. It functions in the pathway carbohydrate biosynthesis; gluconeogenesis. It participates in carbohydrate degradation; glycolysis; D-glyceraldehyde 3-phosphate and glycerone phosphate from D-glucose: step 2/4. In terms of biological role, catalyzes the reversible isomerization of glucose-6-phosphate to fructose-6-phosphate. In Bartonella henselae (strain ATCC 49882 / DSM 28221 / CCUG 30454 / Houston 1) (Rochalimaea henselae), this protein is Glucose-6-phosphate isomerase.